The primary structure comprises 350 residues: Beta-hexosaminidase (350 aa).

Substrate is bound by residues Asp-62, Arg-70, Arg-133, and 163-164; that span reads KH. The Proton donor/acceptor role is filled by His-176. Residue Asp-248 is the Nucleophile of the active site.

It belongs to the glycosyl hydrolase 3 family. NagZ subfamily.

The protein resides in the cytoplasm. The catalysed reaction is Hydrolysis of terminal non-reducing N-acetyl-D-hexosamine residues in N-acetyl-beta-D-hexosaminides.. It functions in the pathway cell wall biogenesis; peptidoglycan recycling. Functionally, plays a role in peptidoglycan recycling by cleaving the terminal beta-1,4-linked N-acetylglucosamine (GlcNAc) from peptide-linked peptidoglycan fragments, giving rise to free GlcNAc, anhydro-N-acetylmuramic acid and anhydro-N-acetylmuramic acid-linked peptides. The polypeptide is Beta-hexosaminidase (Haemophilus influenzae (strain PittEE)).